Reading from the N-terminus, the 885-residue chain is Protein MCM10 homolog (885 aa).

Residues 1 to 153 (MDVEEDDLCL…LQEPPDSSLQ (153 aa)) form an N-terminal domain region. Residues 23 to 260 (PCSSEKDKSL…SGDRPQQVSQ (238 aa)) are disordered. The span at 37–56 (GDPDEFDELFDADGDGESYT) shows a compositional bias: acidic residues. A compositionally biased stretch (basic and acidic residues) spans 63-74 (EEGKTGNQEERL). The segment covering 80–89 (DVEDLTDDEV) has biased composition (acidic residues). Threonine 85 carries the phosphothreonine modification. The stretch at 101–139 (PAPSQEKTSEELQDELKKLQEQMKSLQEQLKAASIKQPP) forms a coiled coil. A compositionally biased stretch (basic and acidic residues) spans 107–121 (KTSEELQDELKKLQE). A compositionally biased stretch (basic residues) spans 181–190 (KAKRVARKPK). Residues 193 to 217 (AESSSRMRTPAQPLQVSSSFLEPNH) show a composition bias toward polar residues. Over residues 218-228 (SSSSRSSTPSP) the composition is skewed to low complexity. Residues 236 to 260 (CSRTIRNQNTVSPGNSGDRPQQVSQ) show a composition bias toward polar residues. The tract at residues 251 to 405 (SGDRPQQVSQ…IMGEAMDLGA (155 aa)) is OB-fold domain. The tract at residues 406 to 431 (CKAKKKNGEPCTQTVNLHDCEYCQYH) is zinc finger-like 1. Residues 579 to 642 (QQMLEMRKRR…ATPRMPKLGR (64 aa)) are disordered. Positions 603–621 (VQSPAVPSSSRQAAAQSPR) are enriched in low complexity. Lysine 639 participates in a covalent cross-link: Glycyl lysine isopeptide (Lys-Gly) (interchain with G-Cter in SUMO2). Phosphoserine is present on serine 656. Glycyl lysine isopeptide (Lys-Gly) (interchain with G-Cter in SUMO2) cross-links involve residues lysine 772 and lysine 773. Zinc finger-like stretches follow at residues 793–812 (CRTC…SEQH) and 826–846 (CPCG…CRNC).

This sequence belongs to the MCM10 family. As to quaternary structure, self-associates. Interacts with ORC2. May interact with MCM2 and MCM6. Interacts with the DNA polymerase alpha subunit POLA1. Interacts with RECQL4; this interaction regulates RECQL4 unwinding activity. Interacts with WDHD1.

The protein resides in the nucleus. Functionally, acts as a replication initiation factor that brings together the MCM2-7 helicase and the DNA polymerase alpha/primase complex in order to initiate DNA replication. Additionally, plays a role in preventing DNA damage during replication. Key effector of the RBBP6 and ZBTB38-mediated regulation of DNA-replication and common fragile sites stability; acts as a direct target of transcriptional repression by ZBTB38. This is Protein MCM10 homolog (Mcm10) from Mus musculus (Mouse).